The chain runs to 155 residues: Small ribosomal subunit protein uS7cz/uS7cy (155 aa).

It belongs to the universal ribosomal protein uS7 family. In terms of assembly, part of the 30S ribosomal subunit.

The protein localises to the plastid. Its subcellular location is the chloroplast. One of the primary rRNA binding proteins, it binds directly to 16S rRNA where it nucleates assembly of the head domain of the 30S subunit. This chain is Small ribosomal subunit protein uS7cz/uS7cy (rps7-A), found in Nymphaea alba (White water-lily).